Here is a 208-residue protein sequence, read N- to C-terminus: Cytochrome c oxidase assembly protein CtaG (208 aa).

At 1–19 (MSPPLPQAPQQPAPRRGLG) the chain is on the cytoplasmic side. Residues 20–42 (HDTAVAAVCGLVVALMVGASFAA) traverse the membrane as a helical; Signal-anchor for type II membrane protein segment. The Periplasmic portion of the chain corresponds to 43-208 (VPFYNWFCRT…SEPAPRKGNL (166 aa)).

Belongs to the COX11/CtaG family.

Its subcellular location is the cell inner membrane. Its function is as follows. Exerts its effect at some terminal stage of cytochrome c oxidase synthesis, probably by being involved in the insertion of the copper B into subunit I. The chain is Cytochrome c oxidase assembly protein CtaG from Rhodopseudomonas palustris (strain TIE-1).